Consider the following 2801-residue polypeptide: Neurobeachin-like protein 2 (2801 aa).

Positions 1379–1529 (RHEEEYEEEE…TISNTSNPQA (151 aa)) are disordered. Over residues 1383–1393 (EYEEEEGETQD) the composition is skewed to acidic residues. 4 stretches are compositionally biased toward polar residues: residues 1400–1413 (DLSQ…QLKN), 1424–1437 (GDQS…SNTV), 1470–1481 (KGPQTPVGSQPE), and 1500–1528 (SSSL…SNPQ). In terms of domain architecture, BEACH-type PH spans 1986 to 2086 (SQKEKLVLSE…VRNKVYSRIL (101 aa)). One can recognise a BEACH domain in the interval 2099-2391 (RSPQELLKAS…QLLKEPHPPR (293 aa)). 7 WD repeats span residues 2431–2468 (LVQA…SWLP), 2492–2535 (RFLS…MLGK), 2538–2575 (LVGR…VWQV), 2588–2626 (RPIQ…VHSV), 2633–2676 (WTLR…RYAL), 2684–2719 (TLLA…IRDL), and 2727–2762 (APLA…VGAG).

The protein belongs to the WD repeat neurobeachin family.

Its subcellular location is the endoplasmic reticulum. Functionally, involved in thrombopoiesis. Plays a role in the development or secretion of alpha-granules, that contain several growth factors important for platelet biogenesis. The protein is Neurobeachin-like protein 2 (nbeal2) of Danio rerio (Zebrafish).